Consider the following 490-residue polypeptide: Zinc finger protein STP4 (490 aa).

2 stretches are compositionally biased toward low complexity: residues 1-16 (MLVS…SVMS) and 52-73 (PSLP…STLN). Residues 1–85 (MLVSSSFASS…PPPPLTTSYS (85 aa)) are disordered. Ser153 and Ser155 each carry phosphoserine. Over residues 231–247 (QQQQQLNSSSSASALPS) the composition is skewed to low complexity. Positions 231–273 (QQQQQLNSSSSASALPSIHSPLTNEHTSRYSSSLKDSAKITKQ) are disordered. The span at 250 to 265 (SPLTNEHTSRYSSSLK) shows a compositional bias: polar residues. Residues 304-326 (HKCPICQRGFARNNDLIRHKKRH) form a C2H2-type zinc finger. The segment at 338-375 (ESDNNSGADDQDDTARTSANNDSDDSNDKLAASSSSEE) is disordered.

The protein localises to the cytoplasm. It localises to the mitochondrion. It is found in the nucleus. The sequence is that of Zinc finger protein STP4 (STP4) from Saccharomyces cerevisiae (strain ATCC 204508 / S288c) (Baker's yeast).